A 329-amino-acid chain; its full sequence is tRNA pseudouridine synthase B (329 aa).

D42 serves as the catalytic Nucleophile.

The protein belongs to the pseudouridine synthase TruB family. Type 1 subfamily.

The catalysed reaction is uridine(55) in tRNA = pseudouridine(55) in tRNA. Functionally, responsible for synthesis of pseudouridine from uracil-55 in the psi GC loop of transfer RNAs. The sequence is that of tRNA pseudouridine synthase B from Lactococcus lactis subsp. lactis (strain IL1403) (Streptococcus lactis).